The chain runs to 119 residues: Ribonuclease P protein component (119 aa).

The protein belongs to the RnpA family. As to quaternary structure, consists of a catalytic RNA component (M1 or rnpB) and a protein subunit.

The enzyme catalyses Endonucleolytic cleavage of RNA, removing 5'-extranucleotides from tRNA precursor.. Its function is as follows. RNaseP catalyzes the removal of the 5'-leader sequence from pre-tRNA to produce the mature 5'-terminus. It can also cleave other RNA substrates such as 4.5S RNA. The protein component plays an auxiliary but essential role in vivo by binding to the 5'-leader sequence and broadening the substrate specificity of the ribozyme. The protein is Ribonuclease P protein component of Mycobacterium avium (strain 104).